Reading from the N-terminus, the 253-residue chain is Triosephosphate isomerase (253 aa).

9-11 (NWK) is a binding site for substrate. Residue His95 is the Electrophile of the active site. The Proton acceptor role is filled by Glu167. Substrate is bound by residues Gly173, Ser213, and 234–235 (GG). Ser213 carries the phosphoserine modification.

This sequence belongs to the triosephosphate isomerase family. As to quaternary structure, homodimer.

The protein localises to the cytoplasm. The enzyme catalyses D-glyceraldehyde 3-phosphate = dihydroxyacetone phosphate. It participates in carbohydrate biosynthesis; gluconeogenesis. Its pathway is carbohydrate degradation; glycolysis; D-glyceraldehyde 3-phosphate from glycerone phosphate: step 1/1. Functionally, involved in the gluconeogenesis. Catalyzes stereospecifically the conversion of dihydroxyacetone phosphate (DHAP) to D-glyceraldehyde-3-phosphate (G3P). In Lysinibacillus sphaericus (strain C3-41), this protein is Triosephosphate isomerase.